A 275-amino-acid polypeptide reads, in one-letter code: Malonyl-[acyl-carrier protein] O-methyltransferase (275 aa).

The protein belongs to the methyltransferase superfamily.

It carries out the reaction malonyl-[ACP] + S-adenosyl-L-methionine = malonyl-[ACP] methyl ester + S-adenosyl-L-homocysteine. It functions in the pathway cofactor biosynthesis; biotin biosynthesis. Its function is as follows. Converts the free carboxyl group of a malonyl-thioester to its methyl ester by transfer of a methyl group from S-adenosyl-L-methionine (SAM). It allows to synthesize pimeloyl-ACP via the fatty acid synthetic pathway. In Methylococcus capsulatus (strain ATCC 33009 / NCIMB 11132 / Bath), this protein is Malonyl-[acyl-carrier protein] O-methyltransferase.